Here is a 440-residue protein sequence, read N- to C-terminus: MNPSQILENLKKELSENEYENYLSNLKFNEKQSKADLLVFNAPNELMAKFIQTKYGKKIAHFYEVQSGNKAIINIQAQSAKQSNKSTKIDIAHIKAQSTILNPSFTFDSFVVGDSNKYAYGACKAITHKDKLGKLYNPIFVYGPTGLGKTHLLQAVGNASLEMGKKVIYATSENFINDFTSNLKNGSLDKFHEKYRNCDVLLIDDVQFLGKTDKIQEEFFFIFNEIKNNDGQIIMTSDNPPNMLKGITERLKSRFAHGIIADITPPQLDTKIAIIRKKCEFNDINLSNDIINYIATSLGDNIREIEGIIISLNAYATILGQEITLELAKSVMKDHIKEKKENITIDDILSLVCKEFNIKPSDVKSNKKTQNIVTARRIVIYLARALTALTMPQLANYFEMKDHTAISHNVKKITEMIENDGSLKAKIEELKNKILVKSQS.

A domain I, interacts with DnaA modulators region spans residues 1–74; it reads MNPSQILENL…VQSGNKAIIN (74 aa). Residues 74 to 99 are domain II; it reads NIQAQSAKQSNKSTKIDIAHIKAQST. The interval 100-316 is domain III, AAA+ region; that stretch reads ILNPSFTFDS…GIIISLNAYA (217 aa). ATP contacts are provided by glycine 146, glycine 148, lysine 149, and threonine 150. The domain IV, binds dsDNA stretch occupies residues 317 to 440; the sequence is TILGQEITLE…KNKILVKSQS (124 aa).

The protein belongs to the DnaA family. In terms of assembly, oligomerizes as a right-handed, spiral filament on DNA at oriC.

Its subcellular location is the cytoplasm. Plays an essential role in the initiation and regulation of chromosomal replication. ATP-DnaA binds to the origin of replication (oriC) to initiate formation of the DNA replication initiation complex once per cell cycle. Binds the DnaA box (a 9 base pair repeat at the origin) and separates the double-stranded (ds)DNA. Forms a right-handed helical filament on oriC DNA; dsDNA binds to the exterior of the filament while single-stranded (ss)DNA is stabiized in the filament's interior. The ATP-DnaA-oriC complex binds and stabilizes one strand of the AT-rich DNA unwinding element (DUE), permitting loading of DNA polymerase. After initiation quickly degrades to an ADP-DnaA complex that is not apt for DNA replication. Binds acidic phospholipids. The polypeptide is Chromosomal replication initiator protein DnaA (Campylobacter jejuni (strain RM1221)).